The following is a 439-amino-acid chain: GTPase Der (439 aa).

2 consecutive EngA-type G domains span residues 4 to 166 (PIVA…PAQD) and 175 to 350 (IRIA…EEAS). GTP is bound by residues 10 to 17 (GRPNVGKS), 57 to 61 (DTGGL), 119 to 122 (NKVE), 181 to 188 (GRPNVGKS), 228 to 232 (DTAGM), and 293 to 296 (NKWD). The KH-like domain occupies 351 to 435 (KRVATADLNN…PIRFFLRKRE (85 aa)).

The protein belongs to the TRAFAC class TrmE-Era-EngA-EngB-Septin-like GTPase superfamily. EngA (Der) GTPase family. In terms of assembly, associates with the 50S ribosomal subunit.

In terms of biological role, GTPase that plays an essential role in the late steps of ribosome biogenesis. This is GTPase Der from Desulforamulus reducens (strain ATCC BAA-1160 / DSM 100696 / MI-1) (Desulfotomaculum reducens).